The chain runs to 392 residues: Imidazolonepropionase (392 aa).

Residues His70 and His72 each contribute to the Fe(3+) site. Positions 70 and 72 each coordinate Zn(2+). 4-imidazolone-5-propanoate is bound by residues Arg79, Tyr137, and His164. Position 137 (Tyr137) interacts with N-formimidoyl-L-glutamate. Position 227 (His227) interacts with Fe(3+). His227 serves as a coordination point for Zn(2+). Gln230 contacts 4-imidazolone-5-propanoate. Asp301 is a Fe(3+) binding site. Asp301 is a binding site for Zn(2+). 2 residues coordinate N-formimidoyl-L-glutamate: Asn303 and Gly305. Thr306 is a binding site for 4-imidazolone-5-propanoate.

Belongs to the metallo-dependent hydrolases superfamily. HutI family. It depends on Zn(2+) as a cofactor. Fe(3+) serves as cofactor.

Its subcellular location is the cytoplasm. The catalysed reaction is 4-imidazolone-5-propanoate + H2O = N-formimidoyl-L-glutamate. Its pathway is amino-acid degradation; L-histidine degradation into L-glutamate; N-formimidoyl-L-glutamate from L-histidine: step 3/3. In terms of biological role, catalyzes the hydrolytic cleavage of the carbon-nitrogen bond in imidazolone-5-propanoate to yield N-formimidoyl-L-glutamate. It is the third step in the universal histidine degradation pathway. This is Imidazolonepropionase from Nocardia farcinica (strain IFM 10152).